The following is a 192-amino-acid chain: Orotate phosphoribosyltransferase 2 (192 aa).

Residue glutamate 116–serine 124 coordinates 5-phospho-alpha-D-ribose 1-diphosphate. Orotate-binding residues include threonine 120 and arginine 148.

It belongs to the purine/pyrimidine phosphoribosyltransferase family. PyrE subfamily. As to quaternary structure, homodimer. Requires Mg(2+) as cofactor.

It carries out the reaction orotidine 5'-phosphate + diphosphate = orotate + 5-phospho-alpha-D-ribose 1-diphosphate. The protein operates within pyrimidine metabolism; UMP biosynthesis via de novo pathway; UMP from orotate: step 1/2. Catalyzes the transfer of a ribosyl phosphate group from 5-phosphoribose 1-diphosphate to orotate, leading to the formation of orotidine monophosphate (OMP). The protein is Orotate phosphoribosyltransferase 2 of Mesorhizobium japonicum (strain LMG 29417 / CECT 9101 / MAFF 303099) (Mesorhizobium loti (strain MAFF 303099)).